A 2371-amino-acid chain; its full sequence is Reducing polyketide synthase DEP5 (2371 aa).

The Ketosynthase family 3 (KS3) domain maps to 47–477 (LEPIAVVGMG…GTNAHTIIES (431 aa)). Catalysis depends on for beta-ketoacyl synthase activity residues Cys-221, His-358, and His-399. The segment at 593-905 (VFTGQGAQWA…QYLPTLIRGS (313 aa)) is malonyl-CoA:ACP transacylase (MAT) domain. Catalysis depends on Ser-685, which acts as the For malonyltransferase activity. The N-terminal hotdog fold stretch occupies residues 982-1120 (HDVLGQLTIG…GSIRINTSNK (139 aa)). A dehydratase (DH) domain region spans residues 982-1158 (HDVLGQLTIG…FNYGPTFQDM (177 aa)). A PKS/mFAS DH domain is found at 982–1286 (HDVLGQLTIG…CTAYEAAIPQ (305 aa)). His-1014 acts as the Proton acceptor; for dehydratase activity in catalysis. The interval 1132–1286 (PQRASGKLWN…CTAYEAAIPQ (155 aa)) is C-terminal hotdog fold. The active-site Proton donor; for dehydratase activity is the Asp-1195. The tract at residues 1656 to 1964 (GKVEAGKVVF…QSLSSTETVL (309 aa)) is enoyl reductase (ER) domain. The segment at 1988–2163 (ATYLLVGCLG…KHACAVVLPM (176 aa)) is ketoreductase (KR) domain. In terms of domain architecture, Carrier spans 2286-2364 (SLVRDHFISK…KFAELVCAAQ (79 aa)). Ser-2323 is modified (O-(pantetheine 4'-phosphoryl)serine).

The protein operates within polyketide biosynthesis. Part of the gene cluster that mediates the biosynthesis of depudecin, a highly oxidized eleven-carbon linear polyketide that acts as a histone deacetylase (HDAC) inhibitor and makes a small contribution to pathogenesis. The reducing polyketide synthase DEP5 is the central enzyme in depudecin biosynthesis by yielding the backbone polyketide chain. The monooxygenases DEP2 and DEP4, as well as the uncharacterized protein DEP1, then act as tailoring enzymes to modify the intermediate polyketide chain into depudecin. In Fusarium langsethiae, this protein is Reducing polyketide synthase DEP5.